We begin with the raw amino-acid sequence, 113 residues long: Protein translation factor SUI1 homolog (113 aa).

It belongs to the SUI1 family.

Functionally, probably involved in translation. The sequence is that of Protein translation factor SUI1 homolog from Spuriopimpinella brachycarpa (Chamnamul).